We begin with the raw amino-acid sequence, 284 residues long: Tropomyosin alpha-1 chain (284 aa).

Residues 1 to 38 (MDAIKKKMQMLKLDKENALDRAEQAEADKKGAEDKSKQ) are disordered. Positions 1-284 (MDAIKKKMQM…DHALNDMTSI (284 aa)) form a coiled coil. Over residues 12–38 (KLDKENALDRAEQAEADKKGAEDKSKQ) the composition is skewed to basic and acidic residues.

It belongs to the tropomyosin family. As to quaternary structure, homodimer. Heterodimer of an alpha (TPM1, TPM3 or TPM4) and a beta (TPM2) chain.

Its subcellular location is the cytoplasm. It localises to the cytoskeleton. Functionally, binds to actin filaments in muscle and non-muscle cells. Plays a central role, in association with the troponin complex, in the calcium dependent regulation of vertebrate striated muscle contraction. Smooth muscle contraction is regulated by interaction with caldesmon. In non-muscle cells is implicated in stabilizing cytoskeleton actin filaments. The chain is Tropomyosin alpha-1 chain (tpm1) from Xenopus laevis (African clawed frog).